The chain runs to 243 residues: Orotidine 5'-phosphate decarboxylase (243 aa).

Residues D19, K41, 69-78 (DLKFFDIPAT), T124, R185, Q194, G214, and R215 contribute to the substrate site. K71 serves as the catalytic Proton donor.

This sequence belongs to the OMP decarboxylase family. Type 1 subfamily. Homodimer.

The enzyme catalyses orotidine 5'-phosphate + H(+) = UMP + CO2. Its pathway is pyrimidine metabolism; UMP biosynthesis via de novo pathway; UMP from orotate: step 2/2. Catalyzes the decarboxylation of orotidine 5'-monophosphate (OMP) to uridine 5'-monophosphate (UMP). The polypeptide is Orotidine 5'-phosphate decarboxylase (Xanthomonas campestris pv. campestris (strain 8004)).